Consider the following 845-residue polypeptide: Protein TSD2 (845 aa).

The disordered stretch occupies residues 193-283; it reads DVDSDSESDS…SASATRLTNA (91 aa). 2 stretches are compositionally biased toward basic and acidic residues: residues 202–212 and 230–242; these read SDSHSDSHSDS and ARSHDERQRDGSG. Residues 243 to 272 show a composition bias toward basic residues; that stretch reads GKRKRGSHSPLSRRRQRHKQGQRHKPRHRS.

It belongs to the CDC45 family.

It is found in the nucleus. Its function is as follows. Temperature-sensitive protein required for DNA synthesis. May be a transcription factor that regulates the level or influences the stability of DNA polymerases or auxiliary proteins. In Mycosarcoma maydis (Corn smut fungus), this protein is Protein TSD2 (TSD2).